We begin with the raw amino-acid sequence, 302 residues long: MRHLISMRDIGREEILNILDESERMEAILNEKGHCDFLNGRILATLFYEPSTRTRLSFETAMKRLGGNVIGFTDISNTSVTKGESLADTIKVISGYSDLIAIRHPSEGAARLSSENSKVPVINAGDGSNQHPTQTLLDLYTIKREVGHIENLKIAFIGDLKYGRTVHSLCQALSLFKGVEIKLISPDELKMPREVIEDIAGKIKLSEMADVDIDDVDVVYMTRIQKERFVDVNEYYKVKGIYRLSKEHIGEKNVVIMHPLPRVDEIDSEVDNIPQARYFKQSFYGVPVRMAILKLLFEDSVK.

2 residues coordinate carbamoyl phosphate: R53 and T54. K82 provides a ligand contact to L-aspartate. R103, H131, and Q134 together coordinate carbamoyl phosphate. L-aspartate contacts are provided by R164 and R223. Residues L260 and P261 each contribute to the carbamoyl phosphate site.

This sequence belongs to the aspartate/ornithine carbamoyltransferase superfamily. ATCase family. In terms of assembly, heterooligomer of catalytic and regulatory chains.

It catalyses the reaction carbamoyl phosphate + L-aspartate = N-carbamoyl-L-aspartate + phosphate + H(+). It participates in pyrimidine metabolism; UMP biosynthesis via de novo pathway; (S)-dihydroorotate from bicarbonate: step 2/3. In terms of biological role, catalyzes the condensation of carbamoyl phosphate and aspartate to form carbamoyl aspartate and inorganic phosphate, the committed step in the de novo pyrimidine nucleotide biosynthesis pathway. The sequence is that of Aspartate carbamoyltransferase catalytic subunit from Methanococcus maripaludis (strain DSM 14266 / JCM 13030 / NBRC 101832 / S2 / LL).